Here is a 226-residue protein sequence, read N- to C-terminus: ATP synthase F(0) complex subunit a (226 aa).

The next 6 membrane-spanning stretches (helical) occupy residues 14–34, 68–88, 97–117, 138–158, 164–184, and 193–213; these read ILGI…FSAP, WTLM…LGLL, QLSM…LMGF, IPML…ALAV, ITAG…LSSI, and FTIL…QAYV.

It belongs to the ATPase A chain family. Component of the ATP synthase complex composed at least of ATP5F1A/subunit alpha, ATP5F1B/subunit beta, ATP5MC1/subunit c (homooctomer), MT-ATP6/subunit a, MT-ATP8/subunit 8, ATP5ME/subunit e, ATP5MF/subunit f, ATP5MG/subunit g, ATP5MK/subunit k, ATP5MJ/subunit j, ATP5F1C/subunit gamma, ATP5F1D/subunit delta, ATP5F1E/subunit epsilon, ATP5PF/subunit F6, ATP5PB/subunit b, ATP5PD/subunit d, ATP5PO/subunit OSCP. ATP synthase complex consists of a soluble F(1) head domain (subunits alpha(3) and beta(3)) - the catalytic core - and a membrane F(0) domain - the membrane proton channel (subunits c, a, 8, e, f, g, k and j). These two domains are linked by a central stalk (subunits gamma, delta, and epsilon) rotating inside the F1 region and a stationary peripheral stalk (subunits F6, b, d, and OSCP). Interacts with DNAJC30; interaction is direct.

The protein localises to the mitochondrion inner membrane. It carries out the reaction H(+)(in) = H(+)(out). Subunit a, of the mitochondrial membrane ATP synthase complex (F(1)F(0) ATP synthase or Complex V) that produces ATP from ADP in the presence of a proton gradient across the membrane which is generated by electron transport complexes of the respiratory chain. ATP synthase complex consist of a soluble F(1) head domain - the catalytic core - and a membrane F(1) domain - the membrane proton channel. These two domains are linked by a central stalk rotating inside the F(1) region and a stationary peripheral stalk. During catalysis, ATP synthesis in the catalytic domain of F(1) is coupled via a rotary mechanism of the central stalk subunits to proton translocation. With the subunit c (ATP5MC1), forms the proton-conducting channel in the F(0) domain, that contains two crucial half-channels (inlet and outlet) that facilitate proton movement from the mitochondrial intermembrane space (IMS) into the matrix. Protons are taken up via the inlet half-channel and released through the outlet half-channel, following a Grotthuss mechanism. This Tachyglossus aculeatus aculeatus (Southeast Australian short-beaked echidna) protein is ATP synthase F(0) complex subunit a.